Here is a 725-residue protein sequence, read N- to C-terminus: Mitochondrial 15S rRNA processing factor CCM1 (725 aa).

A mitochondrion-targeting transit peptide spans 1–21 (MRLSRIGTPKVSVTRVIPVRN). 7 PPR repeats span residues 189–223 (SAVDVTRLIQNIPKEEKYQHMSLIHEMMFNSGISP), 224–259 (DRYLTDLMMTAFSERSYYEPLVEALFQDYDINGWAP), 260–290 (TDYTFGALIKVYSKGKKLDKINNLLNQMKLK), 296–330 (NKKIYTMVLQTCMKIDDYKKTSEVFDAMKFNSVAT), 333–363 (DTTAYGSMILMHVLNDNVEAALDLYDNLETE), 401–435 (NEKLMTVMMYLTSRDGDLSLTRAIYNTIHESRFKM), and 601–635 (NHDIYHIALQACINNKDIELGQRIWQERGRFRKTP).

This sequence belongs to the CCM1 family. As to quaternary structure, binds to mitochondrial small subunit 15S rRNA.

Its subcellular location is the mitochondrion. Its function is as follows. Regulates mitochondrial small subunit maturation by controlling 15S rRNA 5'-end processing. Localizes to the 5' precursor of the 15S rRNA in a position that is subsequently occupied by mS47 in the mature yeast mtSSU. Uses structure and sequence-specific RNA recognition, binding to a single-stranded region of the precursor and specifically recognizing bases -6 to -1. The exchange of Ccm1 for mS47 is coupled to the irreversible removal of precursor rRNA that is accompanied by conformational changes of the mitoribosomal proteins uS5m and mS26. These conformational changes signal completion of 5'-end rRNA processing through protection of the mature 5'-end of the 15S rRNA and stabilization of mS47. The removal of the 5' precursor together with the dissociation of Ccm1 may be catalyzed by the 5'-3' exoribonuclease Pet127. Involved in the specific removal of group I introns in mitochondrial encoded transcripts. The chain is Mitochondrial 15S rRNA processing factor CCM1 (CCM1) from Komagataella phaffii (strain GS115 / ATCC 20864) (Yeast).